The primary structure comprises 805 residues: Sucrose synthase (805 aa).

The tract at residues 275-752 is GT-B glycosyltransferase; sequence MVFNVVILSP…GLKRIQEKYT (478 aa).

The protein belongs to the glycosyltransferase 1 family. Plant sucrose synthase subfamily.

The catalysed reaction is an NDP-alpha-D-glucose + D-fructose = a ribonucleoside 5'-diphosphate + sucrose + H(+). Sucrose-cleaving enzyme that provides UDP-glucose and fructose for various metabolic pathways. In Solanum tuberosum (Potato), this protein is Sucrose synthase.